Here is a 68-residue protein sequence, read N- to C-terminus: Pantinin-3 (68 aa).

An N-terminal signal peptide occupies residues 1–23; it reads MKTQFAILLIALVLFQLLSQSDA. A Leucine amide modification is found at leucine 36. Residues 40–68 constitute a propeptide that is removed on maturation; that stretch reads GLNELDNLDELFDGEISQADIDFLKELMS.

It belongs to the non-disulfide-bridged peptide (NDBP) superfamily. Short antimicrobial peptide (group 4) family. As to expression, expressed by the venom gland.

It is found in the secreted. The protein resides in the target cell membrane. In terms of biological role, amphipathic peptide that possesses relatively strong activities against Gram-positive bacteria and a fungus, but has very weak antimicrobial activities against Gram-negative bacteria. Also exhibits mild hemolytic activities against human erythrocytes (16 uM induce 70% of hemolysis). Furthermore, this peptide potently inhibits the growth of vancomycin-resistant Enterococcus (VRE) S13, a pathogen that can cause a number of human infections. Minimal inhibitory concentration (MIC) are the following: 16 uM against S.aureus, 6 uM against B.magaterium, 8 uM against M.luteus, 4 uM against VRE, 12 uM against methicillin-resistant S.aureus, 36 uM against E.coli, &gt;87 uM against P.putida, 87 uM against K.oxytoca, &gt;87 uM against E.cloacae, 84 uM against S.enterica and 17 uM against the fungus C.tropicalis. This is Pantinin-3 from Pandinus imperator (Emperor scorpion).